Reading from the N-terminus, the 71-residue chain is ATP synthase subunit c (71 aa).

2 consecutive transmembrane segments (helical) span residues 4-24 and 48-68; these read AVIGAGIAVLTGLGAGIGIGI and IIGAGLAEATAIYGLIIAFMI.

The protein belongs to the ATPase C chain family. As to quaternary structure, F-type ATPases have 2 components, F(1) - the catalytic core - and F(0) - the membrane proton channel. F(1) has five subunits: alpha(3), beta(3), gamma(1), delta(1), epsilon(1). F(0) has three main subunits: a(1), b(2) and c(10-14). The alpha and beta chains form an alternating ring which encloses part of the gamma chain. F(1) is attached to F(0) by a central stalk formed by the gamma and epsilon chains, while a peripheral stalk is formed by the delta and b chains.

The protein resides in the cell membrane. In terms of biological role, f(1)F(0) ATP synthase produces ATP from ADP in the presence of a proton or sodium gradient. F-type ATPases consist of two structural domains, F(1) containing the extramembraneous catalytic core and F(0) containing the membrane proton channel, linked together by a central stalk and a peripheral stalk. During catalysis, ATP synthesis in the catalytic domain of F(1) is coupled via a rotary mechanism of the central stalk subunits to proton translocation. Its function is as follows. Key component of the F(0) channel; it plays a direct role in translocation across the membrane. A homomeric c-ring of between 10-14 subunits forms the central stalk rotor element with the F(1) delta and epsilon subunits. The polypeptide is ATP synthase subunit c (Clostridium botulinum (strain Alaska E43 / Type E3)).